A 205-amino-acid polypeptide reads, in one-letter code: Ribosome maturation factor RimP (205 aa).

It belongs to the RimP family.

It is found in the cytoplasm. Functionally, required for maturation of 30S ribosomal subunits. This Sinorhizobium medicae (strain WSM419) (Ensifer medicae) protein is Ribosome maturation factor RimP.